The chain runs to 256 residues: Ribonuclease HII (256 aa).

The RNase H type-2 domain maps to 72–256; sequence ALICGIDEVG…SFEPIKSMMK (185 aa). Residues aspartate 78, glutamate 79, and aspartate 170 each contribute to the a divalent metal cation site.

It belongs to the RNase HII family. The cofactor is Mn(2+). Requires Mg(2+) as cofactor.

The protein localises to the cytoplasm. It catalyses the reaction Endonucleolytic cleavage to 5'-phosphomonoester.. Functionally, endonuclease that specifically degrades the RNA of RNA-DNA hybrids. The polypeptide is Ribonuclease HII (Staphylococcus epidermidis (strain ATCC 12228 / FDA PCI 1200)).